The following is a 520-amino-acid chain: Maturase K (520 aa).

The protein belongs to the intron maturase 2 family. MatK subfamily.

It is found in the plastid. Its subcellular location is the chloroplast. Functionally, usually encoded in the trnK tRNA gene intron. Probably assists in splicing its own and other chloroplast group II introns. This chain is Maturase K, found in Cycas taitungensis (Prince sago).